Consider the following 190-residue polypeptide: Ribosome hibernation promotion factor (190 aa).

Belongs to the HPF/YfiA ribosome-associated protein family. Long HPF subfamily. Interacts with 100S ribosomes.

The protein resides in the cytoplasm. Required for dimerization of active 70S ribosomes into 100S ribosomes in stationary phase; 100S ribosomes are translationally inactive and sometimes present during exponential growth. This Rhizobium meliloti (strain 1021) (Ensifer meliloti) protein is Ribosome hibernation promotion factor.